The following is a 1190-amino-acid chain: PAN2-PAN3 deadenylation complex catalytic subunit PAN2 (1190 aa).

6 WD repeats span residues 24–63, 129–166, 167–207, 222–264, 266–306, and 322–361; these read TTIV…NSLY, NKFN…PNVL, SSFD…TMKT, GNYI…AIAP, PFPA…NVYL, and NNKP…KDFV. The segment at 364 to 511 is linker; the sequence is PQPVEQPDII…FQYKFQGKLN (148 aa). One can recognise a USP domain in the interval 512 to 924; that stretch reads KVPNCYSRLQ…KPIVIMYQQT (413 aa). In terms of domain architecture, Exonuclease spans 988 to 1158; it reads VAIDAEFVML…EDANTALLLY (171 aa). 4 residues coordinate a divalent metal cation: Asp-991, Glu-993, Asp-1097, and Asp-1150.

This sequence belongs to the peptidase C19 family. PAN2 subfamily. As to quaternary structure, forms a heterotrimer with an asymmetric homodimer of the regulatory subunit PAN3 to form the poly(A)-nuclease (PAN) deadenylation complex. The cofactor is a divalent metal cation.

The protein localises to the cytoplasm. It catalyses the reaction Exonucleolytic cleavage of poly(A) to 5'-AMP.. Its activity is regulated as follows. Positively regulated by the regulatory subunit PAN3. Functionally, catalytic subunit of the poly(A)-nuclease (PAN) deadenylation complex, one of two cytoplasmic mRNA deadenylases involved in mRNA turnover. PAN specifically shortens poly(A) tails of RNA and the activity is stimulated by poly(A)-binding protein PAB1. PAN deadenylation is followed by rapid degradation of the shortened mRNA tails by the CCR4-NOT complex. Deadenylated mRNAs are then degraded by two alternative mechanisms, namely exosome-mediated 3'-5' exonucleolytic degradation, or deadenylation-dependent mRNA decaping and subsequent 5'-3' exonucleolytic degradation by XRN1. May also be involved in post-transcriptional maturation of mRNA poly(A) tails. The protein is PAN2-PAN3 deadenylation complex catalytic subunit PAN2 of Candida albicans (strain SC5314 / ATCC MYA-2876) (Yeast).